Consider the following 61-residue polypeptide: Conotoxin Am14.1 (61 aa).

Propeptides lie at residues 1 to 19 (MLSVQLITPSSHGTAHLPR) and 52 to 61 (KRDLDLFTDQ).

Mostly non-hydroxylated. In terms of processing, contains 2 disulfide bonds. In terms of tissue distribution, expressed by the venom duct.

The protein resides in the secreted. Probable toxin that inhibits ion channels. In Conus amadis (Amadis cone), this protein is Conotoxin Am14.1.